The sequence spans 364 residues: UDP-3-O-acylglucosamine N-acyltransferase (364 aa).

The active-site Proton acceptor is H258.

Belongs to the transferase hexapeptide repeat family. LpxD subfamily. In terms of assembly, homotrimer.

It carries out the reaction a UDP-3-O-[(3R)-3-hydroxyacyl]-alpha-D-glucosamine + a (3R)-hydroxyacyl-[ACP] = a UDP-2-N,3-O-bis[(3R)-3-hydroxyacyl]-alpha-D-glucosamine + holo-[ACP] + H(+). Its pathway is bacterial outer membrane biogenesis; LPS lipid A biosynthesis. In terms of biological role, catalyzes the N-acylation of UDP-3-O-acylglucosamine using 3-hydroxyacyl-ACP as the acyl donor. Is involved in the biosynthesis of lipid A, a phosphorylated glycolipid that anchors the lipopolysaccharide to the outer membrane of the cell. This chain is UDP-3-O-acylglucosamine N-acyltransferase, found in Burkholderia orbicola (strain MC0-3).